We begin with the raw amino-acid sequence, 922 residues long: Up-regulator of cell proliferation (922 aa).

Residues 1–20 (MASSGHSDLGEVTSEIKASE) form a disordered region. Phosphoserine is present on Ser3. A VLIG-type G domain is found at 680 to 920 (RSRLVVLSAL…NIQQLIELVR (241 aa)).

Belongs to the TRAFAC class dynamin-like GTPase superfamily. Very large inducible GTPase (VLIG) family.

It is found in the cytoplasm. The protein resides in the nucleus. In terms of biological role, may be involved in cell cycle progression through the regulation of cyclin D1 expression. The polypeptide is Up-regulator of cell proliferation (URGCP) (Bos taurus (Bovine)).